The following is a 437-amino-acid chain: Trigger factor (437 aa).

In terms of domain architecture, PPIase FKBP-type spans 161–246; the sequence is GDQVNINFVG…VNSVSEAVLP (86 aa).

The protein belongs to the FKBP-type PPIase family. Tig subfamily.

The protein localises to the cytoplasm. The enzyme catalyses [protein]-peptidylproline (omega=180) = [protein]-peptidylproline (omega=0). Its function is as follows. Involved in protein export. Acts as a chaperone by maintaining the newly synthesized protein in an open conformation. Functions as a peptidyl-prolyl cis-trans isomerase. The protein is Trigger factor of Cellvibrio japonicus (strain Ueda107) (Pseudomonas fluorescens subsp. cellulosa).